The primary structure comprises 364 residues: Anhydro-N-acetylmuramic acid kinase (364 aa).

12–19 (GTSHDAID) contacts ATP.

It belongs to the anhydro-N-acetylmuramic acid kinase family.

The enzyme catalyses 1,6-anhydro-N-acetyl-beta-muramate + ATP + H2O = N-acetyl-D-muramate 6-phosphate + ADP + H(+). Its pathway is amino-sugar metabolism; 1,6-anhydro-N-acetylmuramate degradation. It participates in cell wall biogenesis; peptidoglycan recycling. In terms of biological role, catalyzes the specific phosphorylation of 1,6-anhydro-N-acetylmuramic acid (anhMurNAc) with the simultaneous cleavage of the 1,6-anhydro ring, generating MurNAc-6-P. Is required for the utilization of anhMurNAc either imported from the medium or derived from its own cell wall murein, and thus plays a role in cell wall recycling. This Gamma-proteobacterium EBAC31A08 protein is Anhydro-N-acetylmuramic acid kinase.